Reading from the N-terminus, the 113-residue chain is Small ribosomal subunit protein bS6 (113 aa).

This sequence belongs to the bacterial ribosomal protein bS6 family.

Its function is as follows. Binds together with bS18 to 16S ribosomal RNA. This Buchnera aphidicola subsp. Schizaphis graminum (strain Sg) protein is Small ribosomal subunit protein bS6.